A 1515-amino-acid polypeptide reads, in one-letter code: Lysophospholipase nte1 (1515 aa).

Topologically, residues 1 to 59 are cytoplasmic; sequence MESLSNLGNAMSSVLSETTSTTATAILADPTEALSSVVALASDAVSKATSDVVPEHTPT. The chain crosses the membrane as a helical span at residues 60–80; it reads SWFTIILWLLHRISSVLYFVI. The Lumenal portion of the chain corresponds to 81 to 102; sequence KLTTITTPTFLFNIFSTSLTVT. The chain crosses the membrane as a helical span at residues 103-123; that stretch reads MNATTLVLIMLFMMAGVTWVV. Residues 124–1515 are Cytoplasmic-facing; it reads RYRYLNMYSR…RTMAPRRASI (1392 aa). 3 disordered regions span residues 278-303, 519-580, and 617-639; these read MHDTDDDDSPDPTPSAPGTAMPGYPM, VTAT…TPRN, and VNPDSTQASPRFVPTDQRRSRGG. Composition is skewed to polar residues over residues 543 to 554 and 566 to 579; these read LTNTQQLKSGPA and PRPQRNLSPFSTPR. Residues 670–789 and 835–955 contribute to the a nucleoside 3',5'-cyclic phosphate site; these read SPVP…LAGY and RLTE…IAAR. The region spanning 1212–1376 is the PNPLA domain; it reads LVLGGGGARG…IDNLTVSRMK (165 aa). The GXGXXG motif lies at 1216–1221; sequence GGGARG. A GXSXG motif is present at residues 1243–1247; it reads GTSIG. Serine 1245 (nucleophile) is an active-site residue. Aspartate 1363 acts as the Proton acceptor in catalysis. The DGA/G signature appears at 1363–1365; that stretch reads DGG.

This sequence belongs to the NTE family.

The protein resides in the endoplasmic reticulum membrane. It carries out the reaction a 1-acyl-sn-glycero-3-phosphocholine + H2O = sn-glycerol 3-phosphocholine + a fatty acid + H(+). Its activity is regulated as follows. Inhibited by organophosphorus esters. Functionally, intracellular phospholipase B that catalyzes the double deacylation of phosphatidylcholine (PC) to glycerophosphocholine (GroPCho). Plays an important role in membrane lipid homeostasis. Responsible for the rapid PC turnover in response to inositol, elevated temperatures, or when choline is present in the growth medium. In Neurospora crassa (strain ATCC 24698 / 74-OR23-1A / CBS 708.71 / DSM 1257 / FGSC 987), this protein is Lysophospholipase nte1 (nte1).